We begin with the raw amino-acid sequence, 246 residues long: Probable transcriptional regulatory protein ORF2U (246 aa).

Belongs to the TACO1 family.

The protein localises to the cytoplasm. In Hathewaya histolytica (Clostridium histolyticum), this protein is Probable transcriptional regulatory protein ORF2U.